We begin with the raw amino-acid sequence, 246 residues long: MKISLKTDIGQKRSNNQDFINKFDNKKGITLVILADGMGGHRAGNIASEMTVTDLGREWVKTDFTELSQIRDWLFETIQSENQRIYDLGQSEDFKGMGTTVEAVALVESSAIYAHIGDSRIGLVHDGHYTLLTSDHSLVNELVKAGQITEEEAASHPQRNIITQSIGQASPVEPDLGVRVLEPGDYLVINSDGLTNMISNDEIVTILGSKVSLDEKNQEMIDLANLRGGLDNITIALVHNESEDVE.

In terms of domain architecture, PPM-type phosphatase spans 2–240 (KISLKTDIGQ…DNITIALVHN (239 aa)). Residues D36, G37, D192, and D231 each coordinate Mn(2+).

Requires Mg(2+) as cofactor. Mn(2+) is required as a cofactor.

The enzyme catalyses O-phospho-L-seryl-[protein] + H2O = L-seryl-[protein] + phosphate. It carries out the reaction O-phospho-L-threonyl-[protein] + H2O = L-threonyl-[protein] + phosphate. This is Putative protein phosphatase 2C-type from Streptococcus pyogenes serotype M6 (strain ATCC BAA-946 / MGAS10394).